The following is a 957-amino-acid chain: Glycine dehydrogenase (decarboxylating) (957 aa).

K708 carries the post-translational modification N6-(pyridoxal phosphate)lysine.

Belongs to the GcvP family. The glycine cleavage system is composed of four proteins: P, T, L and H. Pyridoxal 5'-phosphate serves as cofactor.

It catalyses the reaction N(6)-[(R)-lipoyl]-L-lysyl-[glycine-cleavage complex H protein] + glycine + H(+) = N(6)-[(R)-S(8)-aminomethyldihydrolipoyl]-L-lysyl-[glycine-cleavage complex H protein] + CO2. Functionally, the glycine cleavage system catalyzes the degradation of glycine. The P protein binds the alpha-amino group of glycine through its pyridoxal phosphate cofactor; CO(2) is released and the remaining methylamine moiety is then transferred to the lipoamide cofactor of the H protein. The sequence is that of Glycine dehydrogenase (decarboxylating) from Enterobacter sp. (strain 638).